The primary structure comprises 118 residues: V-type proton ATPase subunit G 3 (118 aa).

The interval 1-34 (MTSQSQGIHQLLQAEKRAKDKLEEAKKRKGKRLK) is disordered. Residues 5 to 54 (SQGIHQLLQAEKRAKDKLEEAKKRKGKRLKQAKEEAMVEIDQYRMQRDKE) are a coiled coil. Residues 14–26 (AEKRAKDKLEEAK) show a composition bias toward basic and acidic residues.

It belongs to the V-ATPase G subunit family. V-ATPase is a heteromultimeric enzyme made up of two complexes: the ATP-hydrolytic V1 complex and the proton translocation V0 complex. The V1 complex consists of three catalytic AB heterodimers that form a heterohexamer, three peripheral stalks each consisting of EG heterodimers, one central rotor including subunits D and F, and the regulatory subunits C and H. The proton translocation complex V0 consists of the proton transport subunit a, a ring of proteolipid subunits c9c'', rotary subunit d, subunits e and f, and the accessory subunits ATP6AP1/Ac45 and ATP6AP2/PRR. As to expression, kidney.

Functionally, subunit of the V1 complex of vacuolar(H+)-ATPase (V-ATPase), a multisubunit enzyme composed of a peripheral complex (V1) that hydrolyzes ATP and a membrane integral complex (V0) that translocates protons. V-ATPase is responsible for acidifying and maintaining the pH of intracellular compartments and in some cell types, is targeted to the plasma membrane, where it is responsible for acidifying the extracellular environment. The sequence is that of V-type proton ATPase subunit G 3 (ATP6V1G3) from Homo sapiens (Human).